The sequence spans 812 residues: Xaa-Pro dipeptidyl-peptidase (812 aa).

Catalysis depends on charge relay system residues Ser372, Asp492, and His523.

This sequence belongs to the peptidase S15 family. In terms of assembly, homodimer.

The protein localises to the cytoplasm. The enzyme catalyses Hydrolyzes Xaa-Pro-|- bonds to release unblocked, N-terminal dipeptides from substrates including Ala-Pro-|-p-nitroanilide and (sequentially) Tyr-Pro-|-Phe-Pro-|-Gly-Pro-|-Ile.. Functionally, removes N-terminal dipeptides sequentially from polypeptides having unsubstituted N-termini provided that the penultimate residue is proline. The sequence is that of Xaa-Pro dipeptidyl-peptidase from Pediococcus pentosaceus (strain ATCC 25745 / CCUG 21536 / LMG 10740 / 183-1w).